The following is a 307-amino-acid chain: Pseudouridine-5'-phosphate glycosidase (307 aa).

The Proton donor role is filled by glutamate 26. Substrate is bound by residues lysine 88 and valine 108. Residue aspartate 140 coordinates Mn(2+). 142–144 (SAD) lines the substrate pocket. Lysine 161 acts as the Nucleophile in catalysis.

It belongs to the pseudouridine-5'-phosphate glycosidase family. Homotrimer. It depends on Mn(2+) as a cofactor.

It catalyses the reaction D-ribose 5-phosphate + uracil = psi-UMP + H2O. Functionally, catalyzes the reversible cleavage of pseudouridine 5'-phosphate (PsiMP) to ribose 5-phosphate and uracil. Functions biologically in the cleavage direction, as part of a pseudouridine degradation pathway. This is Pseudouridine-5'-phosphate glycosidase from Clostridium botulinum (strain Langeland / NCTC 10281 / Type F).